A 602-amino-acid chain; its full sequence is NADH-quinone oxidoreductase subunit C/D (602 aa).

The NADH dehydrogenase I subunit C stretch occupies residues 1-192; sequence MVNNMTDLTA…DPFELTKAKQ (192 aa). Residues 216-602 are NADH dehydrogenase I subunit D; it reads DFMFLNLGPN…IDFVMSDVDR (387 aa).

This sequence in the N-terminal section; belongs to the complex I 30 kDa subunit family. In the C-terminal section; belongs to the complex I 49 kDa subunit family. In terms of assembly, NDH-1 is composed of 13 different subunits. Subunits NuoB, CD, E, F, and G constitute the peripheral sector of the complex.

It localises to the cell inner membrane. The enzyme catalyses a quinone + NADH + 5 H(+)(in) = a quinol + NAD(+) + 4 H(+)(out). NDH-1 shuttles electrons from NADH, via FMN and iron-sulfur (Fe-S) centers, to quinones in the respiratory chain. The immediate electron acceptor for the enzyme in this species is believed to be ubiquinone. Couples the redox reaction to proton translocation (for every two electrons transferred, four hydrogen ions are translocated across the cytoplasmic membrane), and thus conserves the redox energy in a proton gradient. In Klebsiella pneumoniae subsp. pneumoniae (strain ATCC 700721 / MGH 78578), this protein is NADH-quinone oxidoreductase subunit C/D.